We begin with the raw amino-acid sequence, 295 residues long: Nucleotide-binding protein LSEI_0959 (295 aa).

Residue Gly-12–Thr-19 participates in ATP binding. Asp-62–Ser-65 is a GTP binding site.

This sequence belongs to the RapZ-like family.

In terms of biological role, displays ATPase and GTPase activities. In Lacticaseibacillus paracasei (strain ATCC 334 / BCRC 17002 / CCUG 31169 / CIP 107868 / KCTC 3260 / NRRL B-441) (Lactobacillus paracasei), this protein is Nucleotide-binding protein LSEI_0959.